The sequence spans 140 residues: Protein archease (140 aa).

The Ca(2+) site is built by D11, D139, and L140.

It belongs to the archease family.

Its function is as follows. Activates the tRNA-splicing ligase complex by facilitating the enzymatic turnover of catalytic subunit RtcB. Acts by promoting the guanylylation of RtcB, a key intermediate step in tRNA ligation. Can also alter the NTP specificity of RtcB such that ATP, dGTP or ITP is used efficiently. The sequence is that of Protein archease from Methanopyrus kandleri (strain AV19 / DSM 6324 / JCM 9639 / NBRC 100938).